The following is a 101-amino-acid chain: Protein S100-A7 (101 aa).

An N-acetylserine modification is found at serine 2. EF-hand domains lie at 13–48 (MIDM…SACD) and 50–85 (KGTN…IATD). 2 residues coordinate Zn(2+): histidine 18 and aspartate 25. The cysteines at positions 47 and 96 are disulfide-linked. Ca(2+) contacts are provided by aspartate 63, asparagine 65, aspartate 67, lysine 69, and glutamate 74. Residues histidine 87 and histidine 91 each contribute to the Zn(2+) site.

In terms of assembly, interacts with RANBP9. Fetal ear, skin, and tongue and human cell lines. Highly up-regulated in psoriatic epidermis. Also highly expressed in the urine of bladder squamous cell carcinoma (SCC) bearing patients.

Its subcellular location is the cytoplasm. The protein localises to the secreted. The sequence is that of Protein S100-A7 (S100A7) from Homo sapiens (Human).